The sequence spans 276 residues: Expansin-like A3 (276 aa).

An N-terminal signal peptide occupies residues 1-28; the sequence is MAVLLSILSSSFLLLLAASSSSTPRASA. One can recognise an Expansin-like EG45 domain in the interval 52–158; the sequence is GGGCGYGAMA…RRIPCDYKDK (107 aa). 2 N-linked (GlcNAc...) asparagine glycosylation sites follow: N115 and N159. Positions 172–255 constitute an Expansin-like CBD domain; that stretch reads NNLVIKFLYQ…NWQPGQVYDT (84 aa).

It belongs to the expansin family. Expansin-like A subfamily.

It localises to the secreted. In Oryza sativa subsp. japonica (Rice), this protein is Expansin-like A3 (EXLA3).